Here is a 125-residue protein sequence, read N- to C-terminus: Glycine cleavage system H protein (125 aa).

Positions 22 to 104 (SYIIGITDFA…YDTGWILKLT (83 aa)) constitute a Lipoyl-binding domain. Residue Lys63 is modified to N6-lipoyllysine.

It belongs to the GcvH family. The glycine cleavage system is composed of four proteins: P, T, L and H. The cofactor is (R)-lipoate.

The glycine cleavage system catalyzes the degradation of glycine. The H protein shuttles the methylamine group of glycine from the P protein to the T protein. Its function is as follows. Is also involved in protein lipoylation via its role as an octanoyl/lipoyl carrier protein intermediate. In Listeria innocua serovar 6a (strain ATCC BAA-680 / CLIP 11262), this protein is Glycine cleavage system H protein.